We begin with the raw amino-acid sequence, 129 residues long: Transcription factor bHLH138 (129 aa).

Basic and acidic residues predominate over residues 1-18 (MERYTKKNERFKAEEGKG). Positions 1 to 24 (MERYTKKNERFKAEEGKGSKKSRT) are disordered. The bHLH domain occupies 19-68 (SKKSRTFLTERERRALFNDRFFDLKNLIPNPTKGGEASIVQDGIVYINEL).

It belongs to the bHLH protein family.

Its subcellular location is the nucleus. In Arabidopsis thaliana (Mouse-ear cress), this protein is Transcription factor bHLH138.